The sequence spans 186 residues: MIPEASYDVVVVGAGPAGSTAAMYAAKNGASVLLLDKKREIGSPIQCAGFLPDASEVQALLREAMLPDTLKNYPDSCVLQRIDNQRIFTPNCNIKEFAVRGAVLDRCRYDQFLAEQAARAGAELMIKTRVTKIEGTTVETSGVFGKYRIKAKAIIGADGPNSLVAKSKGLALTSGSRETRLLSNTR.

It belongs to the geranylgeranyl reductase family. ChlP subfamily.

This is an uncharacterized protein from Methanosarcina barkeri.